The chain runs to 437 residues: UDP-N-acetylmuramate--L-alanine ligase (437 aa).

108-114 (GAHGKTS) contacts ATP.

Belongs to the MurCDEF family.

It is found in the cytoplasm. The catalysed reaction is UDP-N-acetyl-alpha-D-muramate + L-alanine + ATP = UDP-N-acetyl-alpha-D-muramoyl-L-alanine + ADP + phosphate + H(+). It functions in the pathway cell wall biogenesis; peptidoglycan biosynthesis. In terms of biological role, cell wall formation. This chain is UDP-N-acetylmuramate--L-alanine ligase, found in Staphylococcus aureus.